Here is a 168-residue protein sequence, read N- to C-terminus: Protein B-Myc (168 aa).

2 disordered regions span residues 26–94 (DDEE…DLPE) and 146–168 (EGAS…TCNT). Phosphoserine is present on residues serine 59 and serine 67.

It localises to the nucleus. Seems to act as an inhibitor of cellular proliferation. The chain is Protein B-Myc (Mycb) from Rattus norvegicus (Rat).